Consider the following 997-residue polypeptide: MSELIVSDVVALSVWGLLTVVKVYQGNFSLSVLFSEAQTLGFLFFISCHWLQSILLPWVVKIKCATRFDIDLVEMEMRAEKYLNSIPANVLEDRAKAYNVSKMTSIKNQIPSGKALYQNGKSLASMIKSQFQPISKVLKGGEVKSYNYIPVGSFTAGEHCELAVPIMPEEELAAIVPDSDFALVTKEDNKAKSVHVGAVEIVMECMTSPDCDIYGGAMFVDTFHEDPKNAVRALFVTQLKGGVSPRCLFFPDTQVEIKKGMNERFRLILSSGNSDFKPGENLAYLKANVAMCGISMNKGYVPTAFHESYARKERASVIEYLGRYSAVIHHRNEFKPEMLKRDGLSFRFGGKTKLIEKGPLQYEWSETASKVVSVKGTGPPTKEDETISKEVSETLGATEHVVFPTRNVVAQAQMEVAQFGRLLDDTKSLKLQSLLNSRIAAGRFSIPMTAVKGTVVFDGLLASLIGTTLRGAPMFRHTYRQSTKLRFIFTINVPISTGIGLMVGYNSVTSDKHLTNEYTISSEESVVWNPACQGVLEFSVSPNPCGMYWSYDYFRQTGSRLSICVISPWSATPTTDCAVAWQIHVDDEQMTMSIFNPTQAPAVLPVKRWMGNLIFKQGAQEQVKKMPLAIGAAVGDDKTAVMTMPNSLAAMWNYQIGTFNFEFTKLSSPFIKGTLLAFIAMDQDVSYSLEELQNFPNKIVQFDEKDGRAYVSFGEEHFAQAWSTQVSGAVTSAKRGCPYLYVVSKDCIASTICGDFQVGVKLLSIENYSPCGYNPGLVVASTIVQNTAGSNSTSLLAWPQFCSPCINVWSEFCALDIPVVDTTKVNFAQYSLDLVNPTVSANASGRNWRFVLIPSPMVYLLQTSDWKRGKLHFKLKILGKSNVKRSEWSSTSRIDVRRAPGTEYLNAITVFTAEPHADEINFEIEICGPNNGFEMWNADFGNQLSWMANVVIGNPDQAGIHQWYVRPGENFEVAGNRMVQPLALSGEDGTGMLPILK.

The segment at Lys-370–Gly-376 is involved in tubule formation by the movement protein.

Interacts with the large capsid protein. As to quaternary structure, interacts with the small capsid protein. Homomultimer; assembles as pentons. Interacts with the movement protein (via C-terminus). In terms of assembly, interacts (via C-terminus) with the large capsid protein. Specific enzymatic cleavages by picornain 3C-like protease in vivo yield mature proteins.

It is found in the host cell junction. It localises to the host plasmodesma. The protein localises to the virion. Its function is as follows. Responsible for viral RNA2 accumulation. May function by recruiting the RNA1-encoded polyprotein that contains the replication protein to RNA2 and enable its replication. In terms of biological role, transports the viral genome to neighboring plant cells directly through plasmosdesmata, without any budding. The movement protein allows efficient cell to cell propagation, by bypassing the host cell wall barrier. Acts by forming a tubular structure at the host plasmodesmata, enlarging it enough to allow free passage of virion capsids. Binds to GTP and to single-stranded RNA and single-stranded DNA in a non-sequence-specific manner. Together with the small capsid protein, forms an icosahedral capsid (T=3) enclosing the viral positive strand RNA genome, with a diameter of approximately 300 Angstroms. The capsid is formed from 60 copies each of the large and the small capsid protein. The large capsid protein interacts with the viral RNA. Functionally, together with the large capsid protein, forms an icosahedral capsid (T=3) enclosing the viral positive strand RNA genome, with a diameter of approximately 300 Angstroms. The capsid is formed from 60 copies each of the large and the small capsid protein. The small capsid protein forms the turrets at the fivefold axes of the viral particle. Also seems to act as suppressor of post-transcriptional gene silencing (PTGS), a mechanism of plant viral defense that limits the accumulation of viral RNAs. In Andean potato mottle virus (APMV), this protein is RNA2 polyprotein.